Here is a 146-residue protein sequence, read N- to C-terminus: Transcriptional regulator MraZ (146 aa).

SpoVT-AbrB domains follow at residues 7 to 54 (NATN…GLDL) and 83 to 126 (GVFV…QPEA).

This sequence belongs to the MraZ family. In terms of assembly, forms oligomers.

It localises to the cytoplasm. The protein localises to the nucleoid. The chain is Transcriptional regulator MraZ from Rhizobium rhizogenes (strain K84 / ATCC BAA-868) (Agrobacterium radiobacter).